Reading from the N-terminus, the 730-residue chain is UvrABC system protein C (730 aa).

A GIY-YIG domain is found at 16–95 (AAPGVYKFRD…IKEFDPRFNV (80 aa)). Positions 208 to 243 (DKLVKDLEKRMQQASEDLDFETAARLRDDIGALRKA) constitute a UVR domain. A disordered region spans residues 678 to 730 (ARALPAAVGDDELDKESESSVTSADAPSAESGSGDEGSESRELSMPTTGPSAQ).

The protein belongs to the UvrC family. As to quaternary structure, interacts with UvrB in an incision complex.

It localises to the cytoplasm. In terms of biological role, the UvrABC repair system catalyzes the recognition and processing of DNA lesions. UvrC both incises the 5' and 3' sides of the lesion. The N-terminal half is responsible for the 3' incision and the C-terminal half is responsible for the 5' incision. The sequence is that of UvrABC system protein C from Rhodococcus erythropolis (strain PR4 / NBRC 100887).